We begin with the raw amino-acid sequence, 314 residues long: Carbamate kinase (314 aa).

It belongs to the carbamate kinase family. As to quaternary structure, homodimer.

Its subcellular location is the cytoplasm. The enzyme catalyses hydrogencarbonate + NH4(+) + ATP = carbamoyl phosphate + ADP + H2O + H(+). Its function is as follows. Carbamate kinase that plays a biosynthetic role in that it produces carbamoyl-phosphate. The sequence is that of Carbamate kinase (cpkA) from Pyrococcus furiosus (strain ATCC 43587 / DSM 3638 / JCM 8422 / Vc1).